We begin with the raw amino-acid sequence, 87 residues long: Small ribosomal subunit protein bS16 (87 aa).

This sequence belongs to the bacterial ribosomal protein bS16 family.

The chain is Small ribosomal subunit protein bS16 from Psychrobacter sp. (strain PRwf-1).